Consider the following 253-residue polypeptide: Ubiquinone biosynthesis O-methyltransferase (253 aa).

R47, G78, D99, and M141 together coordinate S-adenosyl-L-methionine.

This sequence belongs to the methyltransferase superfamily. UbiG/COQ3 family.

The enzyme catalyses a 3-demethylubiquinol + S-adenosyl-L-methionine = a ubiquinol + S-adenosyl-L-homocysteine + H(+). It carries out the reaction a 3-(all-trans-polyprenyl)benzene-1,2-diol + S-adenosyl-L-methionine = a 2-methoxy-6-(all-trans-polyprenyl)phenol + S-adenosyl-L-homocysteine + H(+). It functions in the pathway cofactor biosynthesis; ubiquinone biosynthesis. Its function is as follows. O-methyltransferase that catalyzes the 2 O-methylation steps in the ubiquinone biosynthetic pathway. The chain is Ubiquinone biosynthesis O-methyltransferase from Bradyrhizobium diazoefficiens (strain JCM 10833 / BCRC 13528 / IAM 13628 / NBRC 14792 / USDA 110).